The primary structure comprises 185 residues: Elongation factor P (185 aa).

The protein belongs to the elongation factor P family.

Its subcellular location is the cytoplasm. Its pathway is protein biosynthesis; polypeptide chain elongation. Functionally, involved in peptide bond synthesis. Stimulates efficient translation and peptide-bond synthesis on native or reconstituted 70S ribosomes in vitro. Probably functions indirectly by altering the affinity of the ribosome for aminoacyl-tRNA, thus increasing their reactivity as acceptors for peptidyl transferase. The protein is Elongation factor P of Thermosipho africanus (strain TCF52B).